Reading from the N-terminus, the 194-residue chain is dCTP deaminase, dUMP-forming (194 aa).

DCTP is bound by residues 104–109 (RSSLGR), Asp122, 130–132 (TLE), Gln151, Tyr165, Lys172, and Gln176. The Proton donor/acceptor role is filled by Glu132.

It belongs to the dCTP deaminase family. As to quaternary structure, homotrimer.

The enzyme catalyses dCTP + 2 H2O = dUMP + NH4(+) + diphosphate. The protein operates within pyrimidine metabolism; dUMP biosynthesis; dUMP from dCTP: step 1/1. Functionally, bifunctional enzyme that catalyzes both the deamination of dCTP to dUTP and the hydrolysis of dUTP to dUMP without releasing the toxic dUTP intermediate. This chain is dCTP deaminase, dUMP-forming, found in Dictyoglomus thermophilum (strain ATCC 35947 / DSM 3960 / H-6-12).